The following is a 168-amino-acid chain: uncharacterized protein (168 aa).

An N-acetyltransferase domain is found at 14 to 168 (IDIPLLDAAS…EYKHWIYVTK (155 aa)).

The protein belongs to the acetyltransferase family.

This is an uncharacterized protein from Bacillus subtilis (strain 168).